The primary structure comprises 454 residues: Flagellum-specific ATP synthase (454 aa).

An ATP-binding site is contributed by 182–189 (ASSGLGKS).

It belongs to the ATPase alpha/beta chains family.

The protein localises to the cytoplasm. It catalyses the reaction ATP + H2O + 4 H(+)(in) = ADP + phosphate + 5 H(+)(out). Its function is as follows. Probable catalytic subunit of a protein translocase for flagellum-specific export, or a proton translocase involved in local circuits at the flagellum. May be involved in a specialized protein export pathway that proceeds without signal peptide cleavage. The sequence is that of Flagellum-specific ATP synthase (fliI) from Buchnera aphidicola subsp. Baizongia pistaciae (strain Bp).